Consider the following 184-residue polypeptide: ATP synthase subunit b, chloroplastic (184 aa).

Residues 27–49 (LATNPINLSVVLGVLIFFGKGVL) form a helical membrane-spanning segment.

Belongs to the ATPase B chain family. As to quaternary structure, F-type ATPases have 2 components, F(1) - the catalytic core - and F(0) - the membrane proton channel. F(1) has five subunits: alpha(3), beta(3), gamma(1), delta(1), epsilon(1). F(0) has four main subunits: a(1), b(1), b'(1) and c(10-14). The alpha and beta chains form an alternating ring which encloses part of the gamma chain. F(1) is attached to F(0) by a central stalk formed by the gamma and epsilon chains, while a peripheral stalk is formed by the delta, b and b' chains.

The protein localises to the plastid. The protein resides in the chloroplast thylakoid membrane. In terms of biological role, f(1)F(0) ATP synthase produces ATP from ADP in the presence of a proton or sodium gradient. F-type ATPases consist of two structural domains, F(1) containing the extramembraneous catalytic core and F(0) containing the membrane proton channel, linked together by a central stalk and a peripheral stalk. During catalysis, ATP synthesis in the catalytic domain of F(1) is coupled via a rotary mechanism of the central stalk subunits to proton translocation. Component of the F(0) channel, it forms part of the peripheral stalk, linking F(1) to F(0). The chain is ATP synthase subunit b, chloroplastic from Ceratophyllum demersum (Rigid hornwort).